The sequence spans 262 residues: Hydroxyethylthiazole kinase (262 aa).

Substrate is bound at residue Met50. Arg125 and Thr171 together coordinate ATP. Gly198 contacts substrate.

This sequence belongs to the Thz kinase family. Mg(2+) is required as a cofactor.

It carries out the reaction 5-(2-hydroxyethyl)-4-methylthiazole + ATP = 4-methyl-5-(2-phosphooxyethyl)-thiazole + ADP + H(+). It participates in cofactor biosynthesis; thiamine diphosphate biosynthesis; 4-methyl-5-(2-phosphoethyl)-thiazole from 5-(2-hydroxyethyl)-4-methylthiazole: step 1/1. Functionally, catalyzes the phosphorylation of the hydroxyl group of 4-methyl-5-beta-hydroxyethylthiazole (THZ). The polypeptide is Hydroxyethylthiazole kinase (Escherichia coli (strain K12 / MC4100 / BW2952)).